We begin with the raw amino-acid sequence, 103 residues long: Cobalt transport protein CbiN (103 aa).

The next 2 membrane-spanning stretches (helical) occupy residues valine 6 to valine 26 and leucine 68 to leucine 88.

The protein belongs to the CbiN family. As to quaternary structure, forms an energy-coupling factor (ECF) transporter complex composed of an ATP-binding protein (A component, CbiO), a transmembrane protein (T component, CbiQ) and 2 possible substrate-capture proteins (S components, CbiM and CbiN) of unknown stoichimetry.

It is found in the cell membrane. The protein operates within cofactor biosynthesis; adenosylcobalamin biosynthesis. In terms of biological role, part of the energy-coupling factor (ECF) transporter complex CbiMNOQ involved in cobalt import. In Clostridium perfringens (strain 13 / Type A), this protein is Cobalt transport protein CbiN.